We begin with the raw amino-acid sequence, 170 residues long: Cathelicidin antimicrobial peptide (170 aa).

The N-terminal stretch at 1–30 (MKTQRDGHSLGGWSLMLLLLGLLMPLAIVA) is a signal peptide. The propeptide at 31 to 131 (QVLSYKEAVL…DISCDKDNRR (101 aa)) is cathelin-like domain (CLD). 2 cysteine pairs are disulfide-bonded: cysteine 86/cysteine 97 and cysteine 108/cysteine 125. Residues 150 to 162 (FKRIVQRIKDFLQ) are active core.

The protein belongs to the cathelicidin family. Monomer, homodimer or homotrimer (in vitro). Oligomerizes as tetra- or hexamer in solution (in vitro). Proteolytically cleaved by proteinase PRTN3 into antibacterial peptide LL-37. Proteolytically cleaved by cathepsin CTSG and neutrophil elastase ELANE. Post-translationally, resistant to proteolytic degradation in solution, and when bound to both zwitterionic (mimicking mammalian membranes) and negatively charged membranes (mimicking bacterial membranes). In terms of processing, after secretion onto the skin surface, the CAMP gene product is processed by a serine protease-dependent mechanism into multiple novel antimicrobial peptides distinct from and shorter than cathelicidin LL-37. These peptides show enhanced antimicrobial action, acquiring the ability to kill skin pathogens such as S.aureus, E.coli and C.albicans. These peptides have lost the ability to stimulate CXCL8/IL8 release from keratinocytes. The peptides act synergistically, killing bacteria at lower concentrations when present together, and maintain activity at increased salt condition.

The protein resides in the secreted. It is found in the vesicle. Functionally, antimicrobial protein that is an integral component of the innate immune system. Binds to bacterial lipopolysaccharides (LPS). Acts via neutrophil N-formyl peptide receptors to enhance the release of CXCL2. Postsecretory processing generates multiple cathelicidin antimicrobial peptides with various lengths which act as a topical antimicrobial defense in sweat on skin. The unprocessed precursor form, cathelicidin antimicrobial peptide, inhibits the growth of Gram-negative E.coli and E.aerogenes with efficiencies comparable to that of the mature peptide LL-37 (in vitro). Its function is as follows. Antimicrobial peptide that is an integral component of the innate immune system. Binds to bacterial lipopolysaccharides (LPS). Causes membrane permeabilization by forming transmembrane pores (in vitro). Causes lysis of E.coli. Exhibits antimicrobial activity against Gram-negative bacteria such as P.aeruginosa, S.typhimurium, E.aerogenes, E.coli and P.syringae, Gram-positive bacteria such as L.monocytogenes, S.epidermidis, S.pyogenes and S.aureus, as well as vancomycin-resistant enterococci (in vitro). Exhibits antimicrobial activity against methicillin-resistant S.aureus, P.mirabilis, and C.albicans in low-salt media, but not in media containing 100 mM NaCl (in vitro). Forms chiral supramolecular assemblies with quinolone signal (PQS) molecules of P.aeruginosa, which may lead to interference of bacterial quorum signaling and perturbance of bacterial biofilm formation. May form supramolecular fiber-like assemblies on bacterial membranes. Induces cytokine and chemokine producation as well as TNF/TNFA and CSF2/GMCSF production in normal human keratinocytes. Exhibits hemolytic activity against red blood cells. In terms of biological role, exhibits antimicrobial activity against E.coli and B.megaterium (in vitro). The protein is Cathelicidin antimicrobial peptide of Hylobates moloch (Silvery gibbon).